The primary structure comprises 204 residues: Methyl-CpG-binding domain-containing protein 1 (204 aa).

Residues 1–46 are disordered; that stretch reads MLPFPAMNLKKSRSENSSVASSGSKIEEQTEKSAEPTTIKVQKKAG. Positions 15–24 are enriched in polar residues; sequence ENSSVASSGS. Positions 25-34 are enriched in basic and acidic residues; the sequence is KIEEQTEKSA. A CW-type zinc finger spans residues 49–104; that stretch reads GRSIDVFAVQCEKCMKWRKIDTQDEYEDIRSRVQEDPFFCKTKEGVSCEDVGDLNY. Positions 58 to 96 match the MBD-associated domain (MAD) motif; that stretch reads QCEKCMKWRKIDTQDEYEDIRSRVQEDPFFCKTKEGVSC. Zn(2+) contacts are provided by Cys59, Cys62, Cys88, and Cys96. An MBD domain is found at 110–180; it reads WVIDKPGLPR…GDFNFTVPKV (71 aa).

As to expression, mostly expressed in flowers and buds.

The protein localises to the nucleus. Probable transcriptional regulator. The chain is Methyl-CpG-binding domain-containing protein 1 (MBD1) from Arabidopsis thaliana (Mouse-ear cress).